Reading from the N-terminus, the 746-residue chain is Ribosome biogenesis protein BOP1 (746 aa).

Residues 1–116 (MAGSRGAGRT…PCPRTEMASA (116 aa)) form a disordered region. Low complexity predominate over residues 43–65 (SHSTGSDSGVSDSEESVFSGLED). A compositionally biased stretch (acidic residues) spans 66-87 (SGSDSSEDDDEGDEEGEDGALD). The span at 88–99 (DEGHSGIKKTTE) shows a compositional bias: basic and acidic residues. Thr-106 carries the post-translational modification Phosphothreonine. Tyr-122 carries the phosphotyrosine modification. Phosphoserine occurs at positions 126 and 127. Residues 265 to 427 (MGWIQPRRPR…CLSVSPGGQW (163 aa)) form a sufficient for nucleolar localization region. 7 WD repeats span residues 411 to 450 (GHSD…CVRT), 452 to 492 (PVGG…RLVA), 532 to 576 (CHGK…SPFR), 577 to 615 (RSHG…LTKK), 618 to 657 (PNCK…KPYR), 661 to 700 (HHKK…DLLQ), and 716 to 746 (TRDL…RLFT).

The protein belongs to the WD repeat BOP1/ERB1 family. In terms of assembly, component of the PeBoW complex, composed of BOP1, PES1 and WDR12. The complex is held together by BOP1, which interacts with PES1 via its N-terminal domain and with WDR12 via a high-affinity interaction between the seven-bladed beta-propeller domains of the 2 proteins. The NOP7 complex associates with the 66S pre-ribosome. The PeBoW complex associates with DDX27, BOP1 interacts directly with DDX27.

Its subcellular location is the nucleus. The protein resides in the nucleolus. The protein localises to the nucleoplasm. In terms of biological role, component of the PeBoW complex, which is required for maturation of 28S and 5.8S ribosomal RNAs and formation of the 60S ribosome. This chain is Ribosome biogenesis protein BOP1, found in Homo sapiens (Human).